Reading from the N-terminus, the 179-residue chain is MSRIGLKPIEIPNGVEVKVTEDNLCTVKGPKGELVEQMPKEMIIKVEDNTITVSRPSEIKRHKSLHGLTRTLVFNMIEGVTEGYKKTLIIEGTGYRAAKQGKKLVLNLGYSHTIEKEDPEGISVEVPEQHTLIISGINKQQVGNYAAKIRDLRGPEPYKGKGIRYEDEHIRRKVGKTGK.

This sequence belongs to the universal ribosomal protein uL6 family. As to quaternary structure, part of the 50S ribosomal subunit.

In terms of biological role, this protein binds to the 23S rRNA, and is important in its secondary structure. It is located near the subunit interface in the base of the L7/L12 stalk, and near the tRNA binding site of the peptidyltransferase center. In Finegoldia magna (strain ATCC 29328 / DSM 20472 / WAL 2508) (Peptostreptococcus magnus), this protein is Large ribosomal subunit protein uL6.